Here is a 1194-residue protein sequence, read N- to C-terminus: Cohesin subunit SA-2 (1194 aa).

Residues 224 to 309 enclose the SCD domain; that stretch reads FVHRYRDAIA…SRFKDRIVSM (86 aa). The disordered stretch occupies residues 986-1027; it reads DTMSVMSGMSGRGSSTRSKKIKPPTGKRKLPEAEESSSSDSM. Low complexity predominate over residues 988–1001; sequence MSVMSGMSGRGSST. Positions 1002–1013 are enriched in basic residues; the sequence is RSKKIKPPTGKR.

Belongs to the SCC3 family. Part of the cohesin complex which is composed of a heterodimer between a SMC1 protein (SMC1A or SMC1B) and SMC3, which are attached via their hinge domain, and RAD21 which link them at their heads, and one STAG protein (STAG1, STAG2 or STAG3). In cohesin complexes, STAG2 is mutually exclusive with STAG1 and STAG3. Interacts directly with RAD21 in cohesin complex. Phosphorylated by PLK1. The large dissociation of cohesin from chromosome arms during prophase is partly due to its phosphorylation.

The protein resides in the nucleus. The protein localises to the chromosome. It is found in the centromere. Component of cohesin complex, a complex required for the cohesion of sister chromatids after DNA replication. The cohesin complex apparently forms a large proteinaceous ring within which sister chromatids can be trapped. At anaphase, the complex is cleaved and dissociates from chromatin, allowing sister chromatids to segregate. The cohesin complex may also play a role in spindle pole assembly during mitosis. The polypeptide is Cohesin subunit SA-2 (stag2) (Xenopus laevis (African clawed frog)).